We begin with the raw amino-acid sequence, 504 residues long: D-alanine--D-alanyl carrier protein ligase (504 aa).

ATP is bound at residue 152–153 (TS). Aspartate 197 contributes to the D-alanine binding site. 292–297 (NTYGPT) contributes to the ATP binding site. Valine 301 lines the D-alanine pocket. Residues aspartate 383, 394–397 (YNGR), and lysine 492 each bind ATP. Lysine 492 contacts D-alanine.

Belongs to the ATP-dependent AMP-binding enzyme family. DltA subfamily.

It is found in the cytoplasm. The catalysed reaction is holo-[D-alanyl-carrier protein] + D-alanine + ATP = D-alanyl-[D-alanyl-carrier protein] + AMP + diphosphate. It participates in cell wall biogenesis; lipoteichoic acid biosynthesis. In terms of biological role, catalyzes the first step in the D-alanylation of lipoteichoic acid (LTA), the activation of D-alanine and its transfer onto the D-alanyl carrier protein (Dcp) DltC. In an ATP-dependent two-step reaction, forms a high energy D-alanyl-AMP intermediate, followed by transfer of the D-alanyl residue as a thiol ester to the phosphopantheinyl prosthetic group of the Dcp. D-alanylation of LTA plays an important role in modulating the properties of the cell wall in Gram-positive bacteria, influencing the net charge of the cell wall. The polypeptide is D-alanine--D-alanyl carrier protein ligase (Bacillus mycoides (strain KBAB4) (Bacillus weihenstephanensis)).